Here is a 156-residue protein sequence, read N- to C-terminus: ATP synthase subunit b (156 aa).

A helical transmembrane segment spans residues 12-32 (VAFFIFVLFCMKFVWPPVIAA).

Belongs to the ATPase B chain family. As to quaternary structure, F-type ATPases have 2 components, F(1) - the catalytic core - and F(0) - the membrane proton channel. F(1) has five subunits: alpha(3), beta(3), gamma(1), delta(1), epsilon(1). F(0) has three main subunits: a(1), b(2) and c(10-14). The alpha and beta chains form an alternating ring which encloses part of the gamma chain. F(1) is attached to F(0) by a central stalk formed by the gamma and epsilon chains, while a peripheral stalk is formed by the delta and b chains.

It is found in the cell inner membrane. F(1)F(0) ATP synthase produces ATP from ADP in the presence of a proton or sodium gradient. F-type ATPases consist of two structural domains, F(1) containing the extramembraneous catalytic core and F(0) containing the membrane proton channel, linked together by a central stalk and a peripheral stalk. During catalysis, ATP synthesis in the catalytic domain of F(1) is coupled via a rotary mechanism of the central stalk subunits to proton translocation. Functionally, component of the F(0) channel, it forms part of the peripheral stalk, linking F(1) to F(0). This Pseudomonas syringae pv. syringae (strain B728a) protein is ATP synthase subunit b.